The primary structure comprises 560 residues: Formate--tetrahydrofolate ligase (560 aa).

Residue 69–76 (TPAGEGKS) participates in ATP binding.

This sequence belongs to the formate--tetrahydrofolate ligase family.

It carries out the reaction (6S)-5,6,7,8-tetrahydrofolate + formate + ATP = (6R)-10-formyltetrahydrofolate + ADP + phosphate. The protein operates within one-carbon metabolism; tetrahydrofolate interconversion. The polypeptide is Formate--tetrahydrofolate ligase (Listeria welshimeri serovar 6b (strain ATCC 35897 / DSM 20650 / CCUG 15529 / CIP 8149 / NCTC 11857 / SLCC 5334 / V8)).